Here is a 164-residue protein sequence, read N- to C-terminus: Phosphopantetheine adenylyltransferase (164 aa).

Substrate is bound at residue Ser-9. ATP contacts are provided by residues 9–10 (SF) and His-17. Substrate contacts are provided by Lys-41, Leu-73, and Arg-87. ATP-binding positions include 88–90 (GLR), Glu-98, and 123–129 (YTFLSSS).

Belongs to the bacterial CoaD family. As to quaternary structure, homohexamer. Mg(2+) is required as a cofactor.

It localises to the cytoplasm. The enzyme catalyses (R)-4'-phosphopantetheine + ATP + H(+) = 3'-dephospho-CoA + diphosphate. It functions in the pathway cofactor biosynthesis; coenzyme A biosynthesis; CoA from (R)-pantothenate: step 4/5. Functionally, reversibly transfers an adenylyl group from ATP to 4'-phosphopantetheine, yielding dephospho-CoA (dPCoA) and pyrophosphate. The polypeptide is Phosphopantetheine adenylyltransferase (Dictyoglomus thermophilum (strain ATCC 35947 / DSM 3960 / H-6-12)).